The chain runs to 859 residues: DNA-directed RNA polymerase subunit Rpo1C (859 aa).

It belongs to the RNA polymerase beta' chain family. Part of the RNA polymerase complex. In terms of processing, this protein undergoes a protein self splicing that involves a post-translational excision of the intervening region (intein) followed by peptide ligation.

It is found in the cytoplasm. The enzyme catalyses RNA(n) + a ribonucleoside 5'-triphosphate = RNA(n+1) + diphosphate. DNA-dependent RNA polymerase (RNAP) catalyzes the transcription of DNA into RNA using the four ribonucleoside triphosphates as substrates. Forms part of the jaw domain. This Methanocaldococcus jannaschii (strain ATCC 43067 / DSM 2661 / JAL-1 / JCM 10045 / NBRC 100440) (Methanococcus jannaschii) protein is DNA-directed RNA polymerase subunit Rpo1C.